A 149-amino-acid chain; its full sequence is Large ribosomal subunit protein uL15A (149 aa).

The segment at 21-40 is disordered; it reads RIGKHRKQRGGRGNAGGQHH.

The protein belongs to the universal ribosomal protein uL15 family. As to quaternary structure, component of the large ribosomal subunit.

The protein resides in the cytoplasm. Its subcellular location is the cytosol. It localises to the endoplasmic reticulum. In terms of biological role, component of the large ribosomal subunit. The ribosome is a large ribonucleoprotein complex responsible for the synthesis of proteins in the cell. The polypeptide is Large ribosomal subunit protein uL15A (rpl27a-1) (Entamoeba histolytica (strain ATCC 30459 / HM-1:IMSS / ABRM)).